A 377-amino-acid chain; its full sequence is Protein-arginine rhamnosyltransferase (377 aa).

Residue Y15 coordinates dTDP-beta-L-rhamnose. D17 functions as the Proton acceptor in the catalytic mechanism. DTDP-beta-L-rhamnose is bound by residues Y193, Q255, and 271–275; that span reads RGEDS. Residue E273 is part of the active site.

Belongs to the glycosyltransferase 104 family.

The catalysed reaction is dTDP-beta-L-rhamnose + L-arginyl-[protein] = N(omega)-(alpha-L-rhamnosyl)-L-arginyl-[protein] + dTDP + H(+). In terms of biological role, protein-arginine rhamnosyltransferase that catalyzes the transfer of a single rhamnose to elongation factor P (EF-P) on 'Lys-32', a modification required for EF-P-dependent rescue of polyproline stalled ribosomes. This Pseudomonas putida (strain ATCC 47054 / DSM 6125 / CFBP 8728 / NCIMB 11950 / KT2440) protein is Protein-arginine rhamnosyltransferase.